Reading from the N-terminus, the 508-residue chain is tRNA (guanine(37)-N(1))-methyltransferase (508 aa).

The transit peptide at 1 to 53 directs the protein to the mitochondrion; the sequence is MKFNFWKGLWKPKSLTPTLSHRLYRRMYTPQPPLNREMTVLDRSKFTVSLNLA. Histidine 253 contacts S-adenosyl-L-methionine. Basic and acidic residues predominate over residues 267-284; sequence RERKQQERAKRENHEKST. Positions 267 to 291 are disordered; it reads RERKQQERAKRENHEKSTETAVEPD. Residues 323-324, 351-352, and asparagine 402 each bind S-adenosyl-L-methionine; these read DL and DG.

The protein belongs to the class I-like SAM-binding methyltransferase superfamily. TRM5/TYW2 family. As to quaternary structure, monomer.

The protein localises to the mitochondrion matrix. It localises to the nucleus. It is found in the cytoplasm. It catalyses the reaction guanosine(37) in tRNA + S-adenosyl-L-methionine = N(1)-methylguanosine(37) in tRNA + S-adenosyl-L-homocysteine + H(+). Specifically methylates the N1 position of guanosine-37 in various cytoplasmic and mitochondrial tRNAs. Methylation is not dependent on the nature of the nucleoside 5' of the target nucleoside. This is the first step in the biosynthesis of wybutosine (yW), a modified base adjacent to the anticodon of tRNAs and required for accurate decoding. The chain is tRNA (guanine(37)-N(1))-methyltransferase from Yarrowia lipolytica (strain CLIB 122 / E 150) (Yeast).